A 236-amino-acid polypeptide reads, in one-letter code: Small ribosomal subunit protein uS2c (236 aa).

Belongs to the universal ribosomal protein uS2 family.

The protein resides in the plastid. It localises to the chloroplast. This is Small ribosomal subunit protein uS2c (rps2) from Saccharum hybrid (Sugarcane).